The chain runs to 173 residues: Co-chaperone protein HscB (173 aa).

A J domain is found at 2–74; the sequence is DYFTLLGMPN…LSRAEYMLSL (73 aa).

Belongs to the HscB family. As to quaternary structure, interacts with HscA and stimulates its ATPase activity. Interacts with IscU.

Its function is as follows. Co-chaperone involved in the maturation of iron-sulfur cluster-containing proteins. Seems to help targeting proteins to be folded toward HscA. The sequence is that of Co-chaperone protein HscB from Proteus mirabilis (strain HI4320).